A 102-amino-acid polypeptide reads, in one-letter code: Outer membrane protein assembly factor BamE (102 aa).

The first 20 residues, 1 to 20, serve as a signal peptide directing secretion; that stretch reads MNNYIKALLIIICFSSCSIS.

Belongs to the BamE family. Part of the Bam complex.

The protein localises to the cell outer membrane. Functionally, part of the outer membrane protein assembly complex, which is involved in assembly and insertion of beta-barrel proteins into the outer membrane. This Buchnera aphidicola subsp. Acyrthosiphon pisum (strain APS) (Acyrthosiphon pisum symbiotic bacterium) protein is Outer membrane protein assembly factor BamE.